We begin with the raw amino-acid sequence, 504 residues long: Cytochrome P450 7A1 (504 aa).

The helical transmembrane segment at 4–24 threads the bilayer; sequence TSLIWGIAIAACCCLWLILGI. Residue Cys-444 coordinates heme.

This sequence belongs to the cytochrome P450 family. Heme serves as cofactor. In terms of tissue distribution, detected in liver.

The protein localises to the endoplasmic reticulum membrane. The protein resides in the microsome membrane. The catalysed reaction is cholesterol + reduced [NADPH--hemoprotein reductase] + O2 = 7alpha-hydroxycholesterol + oxidized [NADPH--hemoprotein reductase] + H2O + H(+). It catalyses the reaction 4beta-hydroxycholesterol + reduced [NADPH--hemoprotein reductase] + O2 = 4beta,7alpha-dihydroxycholesterol + oxidized [NADPH--hemoprotein reductase] + H2O + H(+). It carries out the reaction lathosterol + reduced [NADPH--hemoprotein reductase] + O2 = 7alpha,8alpha-epoxy-5alpha-cholestan-3beta-ol + oxidized [NADPH--hemoprotein reductase] + H2O + H(+). The enzyme catalyses lathosterol + reduced [NADPH--hemoprotein reductase] + O2 = 5alpha-cholestan-7-oxo-3beta-ol + oxidized [NADPH--hemoprotein reductase] + H2O + H(+). The catalysed reaction is 7-dehydrocholesterol + reduced [NADPH--hemoprotein reductase] + O2 = 7-oxocholesterol + oxidized [NADPH--hemoprotein reductase] + H2O + H(+). It catalyses the reaction (24S)-hydroxycholesterol + reduced [NADPH--hemoprotein reductase] + O2 = (24S)-7alpha-dihydroxycholesterol + oxidized [NADPH--hemoprotein reductase] + H2O + H(+). It carries out the reaction (24R)-hydroxycholesterol + reduced [NADPH--hemoprotein reductase] + O2 = (24R)-7alpha-dihydroxycholesterol + oxidized [NADPH--hemoprotein reductase] + H2O + H(+). It functions in the pathway lipid metabolism; bile acid biosynthesis. Its pathway is steroid metabolism; cholesterol degradation. Functionally, a cytochrome P450 monooxygenase involved in the metabolism of endogenous cholesterol and its oxygenated derivatives (oxysterols). Mechanistically, uses molecular oxygen inserting one oxygen atom into a substrate, and reducing the second into a water molecule, with two electrons provided by NADPH via cytochrome P450 reductase (CPR; NADPH-ferrihemoprotein reductase). Functions as a critical regulatory enzyme of bile acid biosynthesis and cholesterol homeostasis. Catalyzes the hydroxylation of carbon hydrogen bond at 7-alpha position of cholesterol, a rate-limiting step in cholesterol catabolism and bile acid biosynthesis. 7-alpha hydroxylates several oxysterols, including 4beta-hydroxycholesterol and 24-hydroxycholesterol. Catalyzes the oxidation of the 7,8 double bond of 7-dehydrocholesterol and lathosterol with direct and predominant formation of the 7-keto derivatives. The sequence is that of Cytochrome P450 7A1 from Homo sapiens (Human).